A 335-amino-acid chain; its full sequence is tRNA N6-adenosine threonylcarbamoyltransferase (335 aa).

2 residues coordinate Fe cation: His-111 and His-115. Substrate is bound by residues 134 to 138 (LISGG), Asp-167, Gly-180, and Asn-270. Fe cation is bound at residue Asp-298.

This sequence belongs to the KAE1 / TsaD family. Requires Fe(2+) as cofactor.

The protein resides in the cytoplasm. The catalysed reaction is L-threonylcarbamoyladenylate + adenosine(37) in tRNA = N(6)-L-threonylcarbamoyladenosine(37) in tRNA + AMP + H(+). In terms of biological role, required for the formation of a threonylcarbamoyl group on adenosine at position 37 (t(6)A37) in tRNAs that read codons beginning with adenine. Is involved in the transfer of the threonylcarbamoyl moiety of threonylcarbamoyl-AMP (TC-AMP) to the N6 group of A37, together with TsaE and TsaB. TsaD likely plays a direct catalytic role in this reaction. The sequence is that of tRNA N6-adenosine threonylcarbamoyltransferase from Nitrosococcus oceani (strain ATCC 19707 / BCRC 17464 / JCM 30415 / NCIMB 11848 / C-107).